Reading from the N-terminus, the 1033-residue chain is Potassium-transporting ATPase alpha chain 2 (1033 aa).

Residues 1 to 96 (MRRKTLEIYS…NALSPPKQTP (96 aa)) are Cytoplasmic-facing. A helical transmembrane segment spans residues 97-117 (EIIKFLKQMIGGFSILLWVGA). Over 118-140 (ILCWIAYGIQYASNQSGSLDNVY) the chain is Lumenal. The chain crosses the membrane as a helical span at residues 141–161 (LGVVLALVVILTGIFAYYQEA). Over 162-297 (KSTNIMSSFS…NEKTPIATEI (136 aa)) the chain is Cytoplasmic. The helical transmembrane segment at 298 to 317 (EHFVHIVAGVAVSIGILFFI) threads the bilayer. Residues 318–329 (IAVSLKYRVLDS) lie on the Lumenal side of the membrane. A helical transmembrane segment spans residues 330–347 (IIFLIGIIVANVPEGLLA). Topologically, residues 348-781 (TVTVTLSLTA…EEGRLIFDNL (434 aa)) are cytoplasmic. The 4-aspartylphosphate intermediate role is filled by aspartate 385. Residues aspartate 726 and aspartate 730 each contribute to the Mg(2+) site. The chain crosses the membrane as a helical span at residues 782 to 801 (KKTIAYTLTKNIAELCPFLV). The Lumenal portion of the chain corresponds to 802 to 811 (YIIVGLPLPI). Residues 812–832 (GTITILFIDLGTDIIPSIALA) form a helical membrane-spanning segment. The Cytoplasmic portion of the chain corresponds to 833–852 (YEKVESDIMNRKPRHKKKDR). The chain crosses the membrane as a helical span at residues 853–875 (LVNHQLAIYSYLHIGLMQALGAF). Over 876–927 (LVYFTVYAQQGFWPTSLIQLRVKWEQDYVNDLEDSYGQQWTRYQRKYLEWTG) the chain is Lumenal. Residues 928–947 (YTAFFVGIMVQQIADLIIRK) form a helical membrane-spanning segment. The Cytoplasmic segment spans residues 948–961 (TRRNSIFQQGLFRN). Residue serine 952 is modified to Phosphoserine; by PKA. A helical membrane pass occupies residues 962-980 (KVIWVGITSQIIVALILSC). At 981-995 (GLGSITALNFTMLRV) the chain is on the lumenal side. The helical transmembrane segment at 996 to 1016 (QYWFVAVPHAILIWVYDEVRK) threads the bilayer. Over 1017–1033 (LFLRLYPGSWWDKNMYY) the chain is Cytoplasmic.

It belongs to the cation transport ATPase (P-type) (TC 3.A.3) family. Type IIC subfamily. In terms of assembly, composed of two subunits: alpha (catalytic) and beta. As to expression, found in skin, kidney and distal colon.

The protein resides in the membrane. It carries out the reaction K(+)(out) + ATP + H2O + H(+)(in) = K(+)(in) + ADP + phosphate + 2 H(+)(out). In terms of biological role, catalyzes the hydrolysis of ATP coupled with the exchange of H(+) and K(+) ions across the plasma membrane. Responsible for potassium absorption in various tissues. The chain is Potassium-transporting ATPase alpha chain 2 (ATP12A) from Cavia porcellus (Guinea pig).